The sequence spans 91 residues: Acylphosphatase (91 aa).

Residues arginine 4–tyrosine 91 form the Acylphosphatase-like domain. Residues arginine 19 and asparagine 37 contribute to the active site.

Belongs to the acylphosphatase family.

The enzyme catalyses an acyl phosphate + H2O = a carboxylate + phosphate + H(+). The chain is Acylphosphatase (acyP) from Geobacter sulfurreducens (strain ATCC 51573 / DSM 12127 / PCA).